Reading from the N-terminus, the 202-residue chain is Urease accessory protein UreG (202 aa).

Position 13–20 (13–20) interacts with GTP; that stretch reads GPVGAGKT.

This sequence belongs to the SIMIBI class G3E GTPase family. UreG subfamily. Homodimer. UreD, UreF and UreG form a complex that acts as a GTP-hydrolysis-dependent molecular chaperone, activating the urease apoprotein by helping to assemble the nickel containing metallocenter of UreC. The UreE protein probably delivers the nickel.

The protein localises to the cytoplasm. Facilitates the functional incorporation of the urease nickel metallocenter. This process requires GTP hydrolysis, probably effectuated by UreG. In Dinoroseobacter shibae (strain DSM 16493 / NCIMB 14021 / DFL 12), this protein is Urease accessory protein UreG.